We begin with the raw amino-acid sequence, 472 residues long: Chromosomal replication initiator protein DnaA (472 aa).

A domain I, interacts with DnaA modulators region spans residues 1-80; that stretch reads MDTKQIWFTT…YQVNVRVIIS (80 aa). Residues 80–130 form a domain II region; it reads SSATPAPSEPVAVTPSEPSPTTEVAEPSFASFNQAAPMLNQLPLGDPNRSS. Positions 131-347 are domain III, AAA+ region; it reads VLNPRYTFSS…GCLNRVIAYA (217 aa). 4 residues coordinate ATP: glycine 175, glycine 177, lysine 178, and threonine 179. The interval 348–472 is domain IV, binds dsDNA; the sequence is NLNRTPVTVE…RQRLYGENAR (125 aa).

The protein belongs to the DnaA family. In terms of assembly, oligomerizes as a right-handed, spiral filament on DNA at oriC.

Its subcellular location is the cytoplasm. Its function is as follows. Plays an essential role in the initiation and regulation of chromosomal replication. ATP-DnaA binds to the origin of replication (oriC) to initiate formation of the DNA replication initiation complex once per cell cycle. Binds the DnaA box (a 9 base pair repeat at the origin) and separates the double-stranded (ds)DNA. Forms a right-handed helical filament on oriC DNA; dsDNA binds to the exterior of the filament while single-stranded (ss)DNA is stabiized in the filament's interior. The ATP-DnaA-oriC complex binds and stabilizes one strand of the AT-rich DNA unwinding element (DUE), permitting loading of DNA polymerase. After initiation quickly degrades to an ADP-DnaA complex that is not apt for DNA replication. Binds acidic phospholipids. In Herpetosiphon aurantiacus (strain ATCC 23779 / DSM 785 / 114-95), this protein is Chromosomal replication initiator protein DnaA.